The primary structure comprises 283 residues: Phosphatidylglycerol--prolipoprotein diacylglyceryl transferase (283 aa).

Transmembrane regions (helical) follow at residues 18 to 38 (LFGHPIVWYGLLFALGLIILG), 59 to 79 (LAVYVFVGTIVGARLGHVLFY), 91 to 111 (IFVTWEGGLASHGGTIGIIIA), 124 to 144 (ILWVLDRLAVPTGIVAAMIRL), 185 to 205 (TQIYEALCYLAVFALCMWLYW), 213 to 233 (YSGLIVGVFLTGIFLSRFIIE), and 251 to 271 (GLNMGQLLSIPFVLAGIWLII). R143 is an a 1,2-diacyl-sn-glycero-3-phospho-(1'-sn-glycerol) binding site.

It belongs to the Lgt family.

It is found in the cell inner membrane. The enzyme catalyses L-cysteinyl-[prolipoprotein] + a 1,2-diacyl-sn-glycero-3-phospho-(1'-sn-glycerol) = an S-1,2-diacyl-sn-glyceryl-L-cysteinyl-[prolipoprotein] + sn-glycerol 1-phosphate + H(+). Its pathway is protein modification; lipoprotein biosynthesis (diacylglyceryl transfer). Its function is as follows. Catalyzes the transfer of the diacylglyceryl group from phosphatidylglycerol to the sulfhydryl group of the N-terminal cysteine of a prolipoprotein, the first step in the formation of mature lipoproteins. The sequence is that of Phosphatidylglycerol--prolipoprotein diacylglyceryl transferase from Porphyromonas gingivalis (strain ATCC 33277 / DSM 20709 / CIP 103683 / JCM 12257 / NCTC 11834 / 2561).